The primary structure comprises 580 residues: Zinc finger protein 271 (580 aa).

18 consecutive C2H2-type zinc fingers follow at residues 78–100 (YNCD…QRTH), 104–126 (YECE…QRIH), 132–154 (YPCS…QRVH), 160–182 (YKCD…QRIH), 188–210 (YQCS…LRIH), 216–238 (YMCN…QRIH), 244–266 (YKCD…QRIH), 272–294 (YPCA…RRIH), 300–322 (YKCS…QRIH), 328–350 (YPCN…QRIH), 356–378 (YPCS…YRIH), 384–406 (YECD…QRIH), 412–434 (YPCN…QRVH), 440–462 (YTCN…QRVH), 468–490 (YHCS…HRVH), 496–518 (YACT…QRIH), 524–545 (YKCM…QRIH), and 551–573 (YPCA…QRVH).

The protein belongs to the krueppel C2H2-type zinc-finger protein family. In terms of tissue distribution, selectively expressed in adult testis.

The protein resides in the nucleus. In terms of biological role, may act to control gene activity during the pachytene stage of meiotic prophase. May function as a transcription activator. The sequence is that of Zinc finger protein 271 (Znf271) from Mus musculus (Mouse).